The sequence spans 260 residues: Putative ABC transporter ATP-binding protein SCO3161 (260 aa).

An ABC transporter domain is found at 16-246 (LDVSGLAFAY…DDLMRAHRLE (231 aa)). 49-56 (GPNGAGKT) serves as a coordination point for ATP.

The protein belongs to the ABC transporter superfamily.

The protein localises to the cell membrane. Functionally, probably part of an ABC transporter complex. Responsible for energy coupling to the transport system. The chain is Putative ABC transporter ATP-binding protein SCO3161 from Streptomyces coelicolor (strain ATCC BAA-471 / A3(2) / M145).